A 603-amino-acid chain; its full sequence is Phosphoribosylformylglycinamidine synthase subunit PurL (603 aa).

Histidine 32 is an active-site residue. ATP contacts are provided by tyrosine 35 and lysine 68. Mg(2+) is bound at residue glutamate 70. Substrate contacts are provided by residues 71–74 and arginine 93; that span reads SHNH. Histidine 72 serves as the catalytic Proton acceptor. Aspartate 94 contacts Mg(2+). ATP is bound by residues aspartate 107 and 136–139; that span reads GELR. Substrate is bound by residues glycine 189 and glutamine 208. Aspartate 236 is a Mg(2+) binding site. 280–282 contributes to the substrate binding site; the sequence is ESQ. Residues glycine 388, lysine 429, asparagine 442, and glycine 477 each contribute to the ATP site. Asparagine 478 contacts Mg(2+). A substrate-binding site is contributed by serine 480. Residues serine 549 and histidine 556 each contribute to the ATP site.

This sequence belongs to the FGAMS family. As to quaternary structure, monomer. Part of the FGAM synthase complex composed of 1 PurL, 1 PurQ and 2 PurS subunits.

It localises to the cytoplasm. The catalysed reaction is N(2)-formyl-N(1)-(5-phospho-beta-D-ribosyl)glycinamide + L-glutamine + ATP + H2O = 2-formamido-N(1)-(5-O-phospho-beta-D-ribosyl)acetamidine + L-glutamate + ADP + phosphate + H(+). It participates in purine metabolism; IMP biosynthesis via de novo pathway; 5-amino-1-(5-phospho-D-ribosyl)imidazole from N(2)-formyl-N(1)-(5-phospho-D-ribosyl)glycinamide: step 1/2. Part of the phosphoribosylformylglycinamidine synthase complex involved in the purines biosynthetic pathway. Catalyzes the ATP-dependent conversion of formylglycinamide ribonucleotide (FGAR) and glutamine to yield formylglycinamidine ribonucleotide (FGAM) and glutamate. The FGAM synthase complex is composed of three subunits. PurQ produces an ammonia molecule by converting glutamine to glutamate. PurL transfers the ammonia molecule to FGAR to form FGAM in an ATP-dependent manner. PurS interacts with PurQ and PurL and is thought to assist in the transfer of the ammonia molecule from PurQ to PurL. This is Phosphoribosylformylglycinamidine synthase subunit PurL from Thermotoga maritima (strain ATCC 43589 / DSM 3109 / JCM 10099 / NBRC 100826 / MSB8).